We begin with the raw amino-acid sequence, 256 residues long: Trans-aconitate 2-methyltransferase (256 aa).

The protein belongs to the methyltransferase superfamily. Tam family.

It localises to the cytoplasm. It carries out the reaction trans-aconitate + S-adenosyl-L-methionine = (E)-3-(methoxycarbonyl)pent-2-enedioate + S-adenosyl-L-homocysteine. Catalyzes the S-adenosylmethionine monomethyl esterification of trans-aconitate. This chain is Trans-aconitate 2-methyltransferase, found in Agrobacterium fabrum (strain C58 / ATCC 33970) (Agrobacterium tumefaciens (strain C58)).